The sequence spans 83 residues: Small ribosomal subunit protein eS21 (83 aa).

Residue M1 is modified to N-acetylmethionine. K81 bears the N6-acetyllysine mark.

This sequence belongs to the eukaryotic ribosomal protein eS21 family. As to quaternary structure, component of the 40S small ribosomal subunit.

The protein resides in the cytoplasm. Its subcellular location is the cytosol. It is found in the rough endoplasmic reticulum. In terms of biological role, component of the small ribosomal subunit. The ribosome is a large ribonucleoprotein complex responsible for the synthesis of proteins in the cell. The chain is Small ribosomal subunit protein eS21 (Rps21) from Mus musculus (Mouse).